We begin with the raw amino-acid sequence, 411 residues long: Diaminobutyrate--2-oxoglutarate transaminase (411 aa).

N6-(pyridoxal phosphate)lysine is present on Lys262.

This sequence belongs to the class-III pyridoxal-phosphate-dependent aminotransferase family. It depends on pyridoxal 5'-phosphate as a cofactor.

It catalyses the reaction L-2,4-diaminobutanoate + 2-oxoglutarate = L-aspartate 4-semialdehyde + L-glutamate. The protein operates within amine and polyamine biosynthesis; ectoine biosynthesis; L-ectoine from L-aspartate 4-semialdehyde: step 1/3. Functionally, catalyzes reversively the conversion of L-aspartate beta-semialdehyde (ASA) to L-2,4-diaminobutyrate (DABA) by transamination with L-glutamate. This is Diaminobutyrate--2-oxoglutarate transaminase (ectB) from Vibrio cholerae serotype O1 (strain ATCC 39315 / El Tor Inaba N16961).